The following is a 252-amino-acid chain: Ditrans,polycis-undecaprenyl-diphosphate synthase ((2E,6E)-farnesyl-diphosphate specific) (252 aa).

The active site involves aspartate 25. Aspartate 25 contributes to the Mg(2+) binding site. Substrate is bound by residues 26-29 (GNGR), tryptophan 30, arginine 38, histidine 42, and 70-72 (SSE). The active-site Proton acceptor is asparagine 73. Tryptophan 74, arginine 76, and arginine 193 together coordinate substrate. Histidine 198 is a Mg(2+) binding site. 199 to 201 (RIS) contacts substrate. A Mg(2+)-binding site is contributed by glutamate 212.

The protein belongs to the UPP synthase family. Homodimer. It depends on Mg(2+) as a cofactor.

The enzyme catalyses 8 isopentenyl diphosphate + (2E,6E)-farnesyl diphosphate = di-trans,octa-cis-undecaprenyl diphosphate + 8 diphosphate. In terms of biological role, catalyzes the sequential condensation of isopentenyl diphosphate (IPP) with (2E,6E)-farnesyl diphosphate (E,E-FPP) to yield (2Z,6Z,10Z,14Z,18Z,22Z,26Z,30Z,34E,38E)-undecaprenyl diphosphate (di-trans,octa-cis-UPP). UPP is the precursor of glycosyl carrier lipid in the biosynthesis of bacterial cell wall polysaccharide components such as peptidoglycan and lipopolysaccharide. In Salmonella paratyphi A (strain ATCC 9150 / SARB42), this protein is Ditrans,polycis-undecaprenyl-diphosphate synthase ((2E,6E)-farnesyl-diphosphate specific).